The following is a 260-amino-acid chain: Small ribosomal subunit protein bS6 (260 aa).

The protein belongs to the bacterial ribosomal protein bS6 family.

Functionally, binds together with bS18 to 16S ribosomal RNA. The chain is Small ribosomal subunit protein bS6 from Wolbachia sp. subsp. Brugia malayi (strain TRS).